A 60-amino-acid polypeptide reads, in one-letter code: Short neurotoxin 1 (60 aa).

4 disulfides stabilise this stretch: cysteine 3–cysteine 22, cysteine 17–cysteine 39, cysteine 41–cysteine 52, and cysteine 53–cysteine 58.

Belongs to the three-finger toxin family. Short-chain subfamily. Type I alpha-neurotoxin sub-subfamily. In terms of tissue distribution, expressed by the venom gland.

Its subcellular location is the secreted. Its function is as follows. Binds to muscle nicotinic acetylcholine receptor (nAChR) and inhibit acetylcholine from binding to the receptor, thereby impairing neuromuscular transmission. The recombinant protein also barely blocks voltage-gated potassium channel Kv1.3/KCNA3 (2.71% inhibition at 60 nM of toxin). The chain is Short neurotoxin 1 from Hydrophis lapemoides (Persian gulf sea snake).